The sequence spans 478 residues: Early growth response protein 4 (478 aa).

The segment at 15–37 (SKPTEGCAHTSPELPRLPARDAP) is disordered. 3 C2H2-type zinc fingers span residues 372–396 (FACP…LRIH), 402–424 (FQCR…VRTH), and 430–452 (FACD…SKVH).

The protein belongs to the EGR C2H2-type zinc-finger protein family.

The protein resides in the nucleus. Transcriptional regulator. Recognizes and binds to the DNA sequence 5'-GCGGGGGCG-3' (GSG). Activates the transcription of target genes whose products are required for mitogenesis and differentiation. The polypeptide is Early growth response protein 4 (Egr4) (Rattus norvegicus (Rat)).